The following is a 461-amino-acid chain: Putative transcription initiation factor IIB-like protein (461 aa).

Residues 113-142 (SESLENIQSENSENNDNFTDNNTKKSPTKS) are disordered. The segment covering 121–137 (SENSENNDNFTDNNTKK) has biased composition (low complexity). A TFIIB-type zinc finger spans residues 141 to 173 (KSRICSGCGSKGTLLEDQSSSVLVCSECGMIND). Residues C145, C165, and C168 each coordinate Zn(2+). A run of 2 repeats spans residues 246–327 (ISTI…EKKV) and 360–430 (IRRH…DVTI).

The protein belongs to the TFIIB family.

This chain is Putative transcription initiation factor IIB-like protein, found in Acanthamoeba polyphaga mimivirus (APMV).